A 521-amino-acid chain; its full sequence is Bifunctional purine biosynthesis protein PurH (521 aa).

An MGS-like domain is found at 1–145 (MIKQALISVS…KNHRDVTVVV (145 aa)).

This sequence belongs to the PurH family.

The catalysed reaction is (6R)-10-formyltetrahydrofolate + 5-amino-1-(5-phospho-beta-D-ribosyl)imidazole-4-carboxamide = 5-formamido-1-(5-phospho-D-ribosyl)imidazole-4-carboxamide + (6S)-5,6,7,8-tetrahydrofolate. The enzyme catalyses IMP + H2O = 5-formamido-1-(5-phospho-D-ribosyl)imidazole-4-carboxamide. It participates in purine metabolism; IMP biosynthesis via de novo pathway; 5-formamido-1-(5-phospho-D-ribosyl)imidazole-4-carboxamide from 5-amino-1-(5-phospho-D-ribosyl)imidazole-4-carboxamide (10-formyl THF route): step 1/1. The protein operates within purine metabolism; IMP biosynthesis via de novo pathway; IMP from 5-formamido-1-(5-phospho-D-ribosyl)imidazole-4-carboxamide: step 1/1. This Burkholderia thailandensis (strain ATCC 700388 / DSM 13276 / CCUG 48851 / CIP 106301 / E264) protein is Bifunctional purine biosynthesis protein PurH.